The sequence spans 63 residues: Beta-toxin NaTx36 (63 aa).

The LCN-type CS-alpha/beta domain maps to 1-62 (KDGYPMRSDG…VYDSATSKCR (62 aa)). 4 disulfide bridges follow: Cys-11-Cys-61, Cys-15-Cys-36, Cys-22-Cys-43, and Cys-26-Cys-45.

This sequence belongs to the long (4 C-C) scorpion toxin superfamily. Sodium channel inhibitor family. Beta subfamily. As to expression, expressed by the venom gland.

The protein resides in the secreted. Its function is as follows. Beta toxins bind sodium channels (Nav) and shift the voltage of activation towards more negative potentials thereby affecting sodium channel activation and promoting spontaneous and repetitive firing. Only when tested on grasshopper mouse channels, this toxin inhibits Nav1.8/SCN10A sodium currents in a concentration and voltage-dependent manner (IC(50)=680 nM). This toxin hyperpolarizes the voltage dependence of Nav1.8/SCN10A activation, as well as steady-state fast inactivation and slow inactivation. In contrast to most beta scorpion toxins, this toxin inhibits grasshopper mouse Nav1.8/SCN10A currents through modulation of the domain I S4 voltage sensor, and the domain II second S5-S6 extracellular pore loop. This Centruroides sculpturatus (Arizona bark scorpion) protein is Beta-toxin NaTx36.